A 277-amino-acid polypeptide reads, in one-letter code: Tumor necrosis factor-inducible gene 6 protein (277 aa).

The signal sequence occupies residues 1-17 (MIILIYLFLLLWEDTQG). A Link domain is found at 36–129 (GVYHREARSG…SERWDAYCYN (94 aa)). 3 disulfide bridges follow: C58-C127, C82-C103, and C135-C161. N-linked (GlcNAc...) asparagine glycosylation occurs at N118. The CUB domain maps to 135 to 247 (CGGVFTDPKQ…GGFQIKYVAM (113 aa)). Ca(2+) contacts are provided by E183, D191, D232, S234, and V235. C188 and C210 form a disulfide bridge. N258 carries an N-linked (GlcNAc...) asparagine glycan.

As to quaternary structure, interacts (via Link domain) with inter-alpha-inhibitor (I-alpha-I) component bikunin. Interacts with ITIH2/HC2; this interaction is required for transesterification of the HC to hyaluronan. Interacts (via Link and CUB domains) with ITIH1. Chondroitin sulfate may be required for the stability of the complex. Interacts (via Link domain) with various C-X-C and C-C chemokines including PF4, CXCL8, CXCL11, CXCL12, CCL2, CCL7, CCL19, CCL21, and CCL27; this interaction interferes with chemokine binding to glycosaminoglycans. Interacts (primarily via Link domain) with BMP2; this interaction is inhibited by hyaluronan. Interacts (via both Link and CUB domains) with TNFSF11. Interacts (via CUB domain) with FN1 (via type III repeats 9-14); this interaction enhances fibronectin fibril assembly. TNFAIP6 may act as a bridging molecule between FN1 and THBS1. N-glycosylated. In terms of tissue distribution, expressed in airway epithelium and submucosal gland (at protein level). Colocalizes with bikunin at the ciliary border. Present in bronchoalveolar lavage fluid (at protein level). Expressed in mesenchymal stem cells. Found in the synovial fluid of patients with rheumatoid arthritis.

The protein localises to the secreted. In terms of biological role, major regulator of extracellular matrix organization during tissue remodeling. Catalyzes the transfer of a heavy chain (HC) from inter-alpha-inhibitor (I-alpha-I) complex to hyaluronan. Cleaves the ester bond between the C-terminus of the HC and GalNAc residue of the chondroitin sulfate chain in I-alpha-I complex followed by transesterification of the HC to hyaluronan. In the process, potentiates the antiprotease function of I-alpha-I complex through release of free bikunin. Acts as a catalyst in the formation of hyaluronan-HC oligomers and hyaluronan-rich matrix surrounding the cumulus cell-oocyte complex, a necessary step for oocyte fertilization. Assembles hyaluronan in pericellular matrices that serve as platforms for receptor clustering and signaling. Enables binding of hyaluronan deposited on the surface of macrophages to LYVE1 on lymphatic endothelium and facilitates macrophage extravasation. Alters hyaluronan binding to functionally latent CD44 on vascular endothelium, switching CD44 into an active state that supports leukocyte rolling. Modulates the interaction of chemokines with extracellular matrix components and proteoglycans on endothelial cell surface, likely preventing chemokine gradient formation. In a negative feedback mechanism, may limit excessive neutrophil recruitment at inflammatory sites by antagonizing the association of CXCL8 with glycosaminoglycans on vascular endothelium. Has a role in osteogenesis and bone remodeling. Inhibits BMP2-dependent differentiation of mesenchymal stem cell to osteoblasts. Protects against bone erosion during inflammation by inhibiting TNFSF11/RANKL-dependent osteoclast activation. This chain is Tumor necrosis factor-inducible gene 6 protein (TNFAIP6), found in Homo sapiens (Human).